The sequence spans 100 residues: MARKSLIQREKKRKKLEQKYHLIRRSLKQEIHKVSLLSEKREIYVKLQSLPRNSAPTRLRRRCFMTGRPRANYRDFELSGHILREMVETCLLPGAMRSSW.

Belongs to the universal ribosomal protein uS14 family. In terms of assembly, part of the 30S ribosomal subunit.

The protein resides in the plastid. Functionally, binds 16S rRNA, required for the assembly of 30S particles. This is Small ribosomal subunit protein uS14c (rps14) from Cuscuta gronovii (Common dodder).